The sequence spans 661 residues: Translation factor GUF1 homolog, mitochondrial (661 aa).

The tr-type G domain maps to 59 to 242 (ENIRNFCIVA…AIIDRIPSPK (184 aa)). GTP contacts are provided by residues 68–75 (AHVDHGKS), 135–139 (DTPGH), and 189–192 (NKVD).

Belongs to the TRAFAC class translation factor GTPase superfamily. Classic translation factor GTPase family. LepA subfamily.

It is found in the mitochondrion inner membrane. It catalyses the reaction GTP + H2O = GDP + phosphate + H(+). In terms of biological role, promotes mitochondrial protein synthesis. May act as a fidelity factor of the translation reaction, by catalyzing a one-codon backward translocation of tRNAs on improperly translocated ribosomes. Binds to mitochondrial ribosomes in a GTP-dependent manner. This Ixodes scapularis (Black-legged tick) protein is Translation factor GUF1 homolog, mitochondrial.